The following is a 60-amino-acid chain: MATKTLKVTQTKSSIGRLPKHRATLTGLGLRRINHTVELEDTPAVRGMINKVYYMVKVED.

This sequence belongs to the universal ribosomal protein uL30 family. As to quaternary structure, part of the 50S ribosomal subunit.

The protein is Large ribosomal subunit protein uL30 of Shewanella loihica (strain ATCC BAA-1088 / PV-4).